The sequence spans 227 residues: uncharacterized protein (227 aa).

An N-terminal signal peptide occupies residues 1 to 25; that stretch reads MLIMKKLLLIAATSATMLSSSVSFA.

This sequence to R.conorii RC1281.

This is an uncharacterized protein from Rickettsia conorii (strain ATCC VR-613 / Malish 7).